Consider the following 131-residue polypeptide: D-ribose pyranase (131 aa).

His-20 functions as the Proton donor in the catalytic mechanism. Substrate contacts are provided by residues Asp-28, His-98, and 120–122; that span reads FSN.

This sequence belongs to the RbsD / FucU family. RbsD subfamily. As to quaternary structure, homodecamer.

The protein resides in the cytoplasm. The enzyme catalyses beta-D-ribopyranose = beta-D-ribofuranose. The protein operates within carbohydrate metabolism; D-ribose degradation; D-ribose 5-phosphate from beta-D-ribopyranose: step 1/2. Functionally, catalyzes the interconversion of beta-pyran and beta-furan forms of D-ribose. This is D-ribose pyranase from Levilactobacillus brevis (strain ATCC 367 / BCRC 12310 / CIP 105137 / JCM 1170 / LMG 11437 / NCIMB 947 / NCTC 947) (Lactobacillus brevis).